We begin with the raw amino-acid sequence, 519 residues long: Protein nucleotidyltransferase YdiU (519 aa).

Glycine 101, glycine 103, arginine 104, lysine 123, aspartate 135, glycine 136, arginine 193, and arginine 200 together coordinate ATP. Aspartate 271 serves as the catalytic Proton acceptor. Residues asparagine 272 and aspartate 281 each coordinate Mg(2+). Aspartate 281 contacts ATP.

It belongs to the SELO family. It depends on Mg(2+) as a cofactor. Mn(2+) is required as a cofactor.

It catalyses the reaction L-seryl-[protein] + ATP = 3-O-(5'-adenylyl)-L-seryl-[protein] + diphosphate. The enzyme catalyses L-threonyl-[protein] + ATP = 3-O-(5'-adenylyl)-L-threonyl-[protein] + diphosphate. It carries out the reaction L-tyrosyl-[protein] + ATP = O-(5'-adenylyl)-L-tyrosyl-[protein] + diphosphate. The catalysed reaction is L-histidyl-[protein] + UTP = N(tele)-(5'-uridylyl)-L-histidyl-[protein] + diphosphate. It catalyses the reaction L-seryl-[protein] + UTP = O-(5'-uridylyl)-L-seryl-[protein] + diphosphate. The enzyme catalyses L-tyrosyl-[protein] + UTP = O-(5'-uridylyl)-L-tyrosyl-[protein] + diphosphate. In terms of biological role, nucleotidyltransferase involved in the post-translational modification of proteins. It can catalyze the addition of adenosine monophosphate (AMP) or uridine monophosphate (UMP) to a protein, resulting in modifications known as AMPylation and UMPylation. The protein is Protein nucleotidyltransferase YdiU of Tolumonas auensis (strain DSM 9187 / NBRC 110442 / TA 4).